Consider the following 147-residue polypeptide: Large ribosomal subunit protein uL13 (147 aa).

This sequence belongs to the universal ribosomal protein uL13 family. As to quaternary structure, part of the 50S ribosomal subunit.

Functionally, this protein is one of the early assembly proteins of the 50S ribosomal subunit, although it is not seen to bind rRNA by itself. It is important during the early stages of 50S assembly. The polypeptide is Large ribosomal subunit protein uL13 (Lactobacillus acidophilus (strain ATCC 700396 / NCK56 / N2 / NCFM)).